Here is a 170-residue protein sequence, read N- to C-terminus: Lipoprotein signal peptidase (170 aa).

3 helical membrane passes run 5–25, 62–82, and 89–111; these read IVGVIAIVLVFALDQVSKAYA, SNLIFTYVSLGVILMLFVLFV, and STICMGVVIGGALGNLADRLRFG. Residues Asp115 and Asp133 contribute to the active site. A helical transmembrane segment spans residues 126–146; that stretch reads WPAFNFADVCVTCGVICFLCL.

The protein belongs to the peptidase A8 family.

The protein resides in the cell inner membrane. The catalysed reaction is Release of signal peptides from bacterial membrane prolipoproteins. Hydrolyzes -Xaa-Yaa-Zaa-|-(S,diacylglyceryl)Cys-, in which Xaa is hydrophobic (preferably Leu), and Yaa (Ala or Ser) and Zaa (Gly or Ala) have small, neutral side chains.. It participates in protein modification; lipoprotein biosynthesis (signal peptide cleavage). Functionally, this protein specifically catalyzes the removal of signal peptides from prolipoproteins. This is Lipoprotein signal peptidase from Anaplasma marginale (strain Florida).